The following is a 94-amino-acid chain: Small ribosomal subunit protein uS19 (94 aa).

This sequence belongs to the universal ribosomal protein uS19 family.

Its function is as follows. Protein S19 forms a complex with S13 that binds strongly to the 16S ribosomal RNA. The sequence is that of Small ribosomal subunit protein uS19 (rpsS) from Lactobacillus acidophilus (strain ATCC 700396 / NCK56 / N2 / NCFM).